The chain runs to 523 residues: 2-isopropylmalate synthase (523 aa).

The Pyruvate carboxyltransferase domain occupies 12–274 (VVIFDTTLRD…WNKIDTTQLT (263 aa)). Residues Asp-21, His-209, His-211, and Asn-245 each contribute to the Mn(2+) site. Positions 398–523 (KLLSLSVIAG…AQGAAAAAAS (126 aa)) are regulatory domain.

It belongs to the alpha-IPM synthase/homocitrate synthase family. LeuA type 1 subfamily. As to quaternary structure, homodimer. The cofactor is Mn(2+).

Its subcellular location is the cytoplasm. It carries out the reaction 3-methyl-2-oxobutanoate + acetyl-CoA + H2O = (2S)-2-isopropylmalate + CoA + H(+). Its pathway is amino-acid biosynthesis; L-leucine biosynthesis; L-leucine from 3-methyl-2-oxobutanoate: step 1/4. Catalyzes the condensation of the acetyl group of acetyl-CoA with 3-methyl-2-oxobutanoate (2-ketoisovalerate) to form 3-carboxy-3-hydroxy-4-methylpentanoate (2-isopropylmalate). This chain is 2-isopropylmalate synthase, found in Bradyrhizobium sp. (strain BTAi1 / ATCC BAA-1182).